We begin with the raw amino-acid sequence, 378 residues long: MRSRVPRKEIKSLAFALYDTGETILGALVVSTFFPLFITKHIDVKIYSLSYGISLLASFALAIFLGKLADENALRKKFFTLFSLLTSLFLSSIALLYGTPYLALLSFLLMLISHQQAMVFYNSLLLNFENKGFASGLGVSFGYVGSAIALIFLADKLKEPEVYAVVGLIFLILAVPSIITLENPEISAKISLKEIFGDRTFLLFLLSLLTLTEVANTLIAMMGVYLREVYSLESVEIYRIIGFSALGGVLGGIFWGVLTDKLNVNRVFPLGFFLWSFFFILLFFAKKDYLIFVGLLAGFSLAHLWSTSRVYILENFPKESVSVRMSFLSLTERVASSFGLFLWSFFLFITQDNFRLSALLMGTLPLIGFFIYLKTKLD.

The next 11 membrane-spanning stretches (helical) occupy residues 12–34 (SLAF…STFF), 44–66 (VKIY…IFLG), 92–112 (SIAL…LMLI), 132–154 (GFAS…IFLA), 161–180 (EVYA…SIIT), 200–222 (TFLL…IAMM), 235–257 (VEIY…FWGV), 267–285 (VFPL…LFFA), 290–312 (LIFV…RVYI), 327–349 (FLSL…FLFI), and 356–373 (LSAL…FIYL).

The protein resides in the cell membrane. This is an uncharacterized protein from Aquifex aeolicus (strain VF5).